Here is a 301-residue protein sequence, read N- to C-terminus: MSGVTYRVTGINLKAMPLGEADRIITILTREQGLIRAVAKGSRKQLSKWGGRMEPFVVNDLLVARGRWSAQTDPSQCLQRIAQAETLQSFPRLGRSLAHLTAAQYLAEVALLLALPNQPQEELFVLLVEHLERIEQAPATEAVLPLLVHGLYHLLVVGGVAPSVQACYSCGEELAGEAFFSPHAGGLVCDPCRLAQRLSPVAWVSSSVLQALGSLPNPTLPSLAERALPLASWLAAERLLRRVLELHADRAIRSAGLLASCYSVPVAETLPPTPSGQGSPVAAAAFSEEDSETLGSNLKKL.

Residues 272-301 (PTPSGQGSPVAAAAFSEEDSETLGSNLKKL) are disordered.

The protein belongs to the RecO family.

Its function is as follows. Involved in DNA repair and RecF pathway recombination. The chain is DNA repair protein RecO from Synechococcus sp. (strain JA-3-3Ab) (Cyanobacteria bacterium Yellowstone A-Prime).